We begin with the raw amino-acid sequence, 837 residues long: WW domain-containing protein tag-325 (837 aa).

Residues 1–11 (MTTAVQPSDTT) are compositionally biased toward polar residues. The interval 1 to 66 (MTTAVQPSDT…SNGQNYADDP (66 aa)) is disordered. A compositionally biased stretch (low complexity) spans 33-43 (SESAESSSSSS). Residues 44–61 (QTNVSAANTLPRESNGQN) are compositionally biased toward polar residues. In terms of domain architecture, WW spans 96–129 (RDLLNGWFEYETDVGRTFFFNKETGKSQWIPPRF). The span at 150-161 (TCSFQGSSTSSS) shows a compositional bias: low complexity. Disordered stretches follow at residues 150–181 (TCSF…RKSQ), 194–257 (DDVD…STAS), 338–403 (TTSS…EPAE), 548–574 (MRRR…EPRP), and 778–800 (KNKK…TPVQ). Over residues 162–181 (EEQKENKMRESLADDDRKSQ) the composition is skewed to basic and acidic residues. Over residues 247–257 (PTSSRKASTAS) the composition is skewed to polar residues. Positions 371 to 403 (RCEERRGSGDGREPVRTIRCGDLERSENDEPAE) are enriched in basic and acidic residues. Residues 386–505 (RTIRCGDLER…WYKSLEEVVA (120 aa)) enclose the PH domain. The segment covering 556 to 569 (SQSAIETVSTSVST) has biased composition (polar residues). Residues 610–827 (STLSAICQHE…YLLESANKFD (218 aa)) form the Rho-GAP domain. Positions 778-788 (KNKKAGKKAKP) are enriched in basic residues.

This Caenorhabditis elegans protein is WW domain-containing protein tag-325 (tag-325).